Here is a 118-residue protein sequence, read N- to C-terminus: Large ribosomal subunit protein bL20 (118 aa).

The protein belongs to the bacterial ribosomal protein bL20 family.

Binds directly to 23S ribosomal RNA and is necessary for the in vitro assembly process of the 50S ribosomal subunit. It is not involved in the protein synthesizing functions of that subunit. The sequence is that of Large ribosomal subunit protein bL20 from Sulfurimonas denitrificans (strain ATCC 33889 / DSM 1251) (Thiomicrospira denitrificans (strain ATCC 33889 / DSM 1251)).